The chain runs to 584 residues: Cilia- and flagella-associated protein 184 (584 aa).

Basic and acidic residues-rich tracts occupy residues M1 to L18, P42 to E57, and S67 to V82. Residues M1 to A243 form a disordered region. The span at D119–E146 shows a compositional bias: acidic residues. Residues A189–K232 show a composition bias toward basic and acidic residues. Coiled coils occupy residues L317–Q470 and L530–H561.

Belongs to the CFAP184 family. In terms of assembly, forms a complex with CFAP263; the interaction is required for functional activity in cilia.

The protein resides in the cell projection. It is found in the cilium. Its subcellular location is the cytoplasm. It localises to the cytoskeleton. The protein localises to the microtubule organizing center. The protein resides in the centrosome. Functionally, in complex with CFAP263, acts as a regulator of ciliary beating that connects radial spoke 3 (RS3) to the inner dynein arm (IDA) and the nexin-dynein regulatory complex (N-DRC). The complex is positioned parallel to N-DRC and forms a connection between the arch at the base of RS3, the IDA tail and N-DRC. In Mus musculus (Mouse), this protein is Cilia- and flagella-associated protein 184 (Cfap184).